A 552-amino-acid chain; its full sequence is Chaperonin GroEL (552 aa).

ATP is bound by residues 30–33 (TLGP), lysine 51, 87–91 (DGTTT), glycine 415, and aspartate 496.

The protein belongs to the chaperonin (HSP60) family. In terms of assembly, forms a cylinder of 14 subunits composed of two heptameric rings stacked back-to-back. Interacts with the co-chaperonin GroES.

The protein resides in the cytoplasm. It carries out the reaction ATP + H2O + a folded polypeptide = ADP + phosphate + an unfolded polypeptide.. Functionally, together with its co-chaperonin GroES, plays an essential role in assisting protein folding. The GroEL-GroES system forms a nano-cage that allows encapsulation of the non-native substrate proteins and provides a physical environment optimized to promote and accelerate protein folding. In Paramagnetospirillum magneticum (strain ATCC 700264 / AMB-1) (Magnetospirillum magneticum), this protein is Chaperonin GroEL.